A 437-amino-acid chain; its full sequence is Aspartate--tRNA(Asp/Asn) ligase (437 aa).

An L-aspartate-binding site is contributed by E175. Residues 197–200 are aspartate; sequence QLYK. Residue R219 coordinates L-aspartate. Residues 219 to 221, 227 to 229, and E360 each bind ATP; these read RAE and RHL. Positions 360 and 363 each coordinate Mg(2+). Positions 363 and 367 each coordinate L-aspartate. Residue 408 to 411 coordinates ATP; that stretch reads GAER.

The protein belongs to the class-II aminoacyl-tRNA synthetase family. Type 2 subfamily. As to quaternary structure, homodimer. The cofactor is Mg(2+).

Its subcellular location is the cytoplasm. The catalysed reaction is tRNA(Asx) + L-aspartate + ATP = L-aspartyl-tRNA(Asx) + AMP + diphosphate. Its function is as follows. Aspartyl-tRNA synthetase with relaxed tRNA specificity since it is able to aspartylate not only its cognate tRNA(Asp) but also tRNA(Asn). Reaction proceeds in two steps: L-aspartate is first activated by ATP to form Asp-AMP and then transferred to the acceptor end of tRNA(Asp/Asn). The sequence is that of Aspartate--tRNA(Asp/Asn) ligase from Methanothermobacter thermautotrophicus (strain ATCC 29096 / DSM 1053 / JCM 10044 / NBRC 100330 / Delta H) (Methanobacterium thermoautotrophicum).